The primary structure comprises 224 residues: Small ribosomal subunit protein uS3 (224 aa).

The 69-residue stretch at 39–107 folds into the KH type-2 domain; that stretch reads IREFLKKKPS…DVWVEIAEVK (69 aa).

It belongs to the universal ribosomal protein uS3 family. Part of the 30S ribosomal subunit. Forms a tight complex with proteins S10 and S14.

Binds the lower part of the 30S subunit head. Binds mRNA in the 70S ribosome, positioning it for translation. This is Small ribosomal subunit protein uS3 from Chlamydia trachomatis serovar D (strain ATCC VR-885 / DSM 19411 / UW-3/Cx).